Consider the following 602-residue polypeptide: DNA mismatch repair protein MutL (602 aa).

The interval 337 to 367 is disordered; it reads KRPFPGSSTNYSGIQQDTKKQESDNPEKARG. Residues 342–352 are compositionally biased toward polar residues; it reads GSSTNYSGIQQ. Residues 353 to 367 are compositionally biased toward basic and acidic residues; that stretch reads DTKKQESDNPEKARG.

It belongs to the DNA mismatch repair MutL/HexB family.

In terms of biological role, this protein is involved in the repair of mismatches in DNA. It is required for dam-dependent methyl-directed DNA mismatch repair. May act as a 'molecular matchmaker', a protein that promotes the formation of a stable complex between two or more DNA-binding proteins in an ATP-dependent manner without itself being part of a final effector complex. The chain is DNA mismatch repair protein MutL from Kosmotoga olearia (strain ATCC BAA-1733 / DSM 21960 / TBF 19.5.1).